The sequence spans 359 residues: 3-dehydroquinate synthase (359 aa).

Residues 71-76, 105-109, 129-130, K142, K151, and 169-172 each bind NAD(+); these read DGEQYK, GVIGD, TT, and CLST. Residues E184, H247, and H264 each contribute to the Zn(2+) site.

It belongs to the sugar phosphate cyclases superfamily. Dehydroquinate synthase family. Co(2+) is required as a cofactor. It depends on Zn(2+) as a cofactor. NAD(+) serves as cofactor.

It localises to the cytoplasm. The enzyme catalyses 7-phospho-2-dehydro-3-deoxy-D-arabino-heptonate = 3-dehydroquinate + phosphate. Its pathway is metabolic intermediate biosynthesis; chorismate biosynthesis; chorismate from D-erythrose 4-phosphate and phosphoenolpyruvate: step 2/7. Catalyzes the conversion of 3-deoxy-D-arabino-heptulosonate 7-phosphate (DAHP) to dehydroquinate (DHQ). This is 3-dehydroquinate synthase from Shewanella pealeana (strain ATCC 700345 / ANG-SQ1).